The sequence spans 154 residues: Myoglobin (154 aa).

Positions 2–148 constitute a Globin domain; sequence GLSDGEWQLV…FRNDIAAKYK (147 aa). Position 4 is a phosphoserine (Ser4). His65 lines the nitrite pocket. Position 65 (His65) interacts with O2. Residue Thr68 is modified to Phosphothreonine. His94 provides a ligand contact to heme b.

This sequence belongs to the globin family. Monomeric.

It localises to the cytoplasm. The protein resides in the sarcoplasm. The enzyme catalyses Fe(III)-heme b-[protein] + nitric oxide + H2O = Fe(II)-heme b-[protein] + nitrite + 2 H(+). It catalyses the reaction H2O2 + AH2 = A + 2 H2O. Monomeric heme protein which primary function is to store oxygen and facilitate its diffusion within muscle tissues. Reversibly binds oxygen through a pentacoordinated heme iron and enables its timely and efficient release as needed during periods of heightened demand. Depending on the oxidative conditions of tissues and cells, and in addition to its ability to bind oxygen, it also has a nitrite reductase activity whereby it regulates the production of bioactive nitric oxide. Under stress conditions, like hypoxia and anoxia, it also protects cells against reactive oxygen species thanks to its pseudoperoxidase activity. The polypeptide is Myoglobin (MB) (Spalax ehrenbergi (Middle East blind mole rat)).